The chain runs to 94 residues: Putative regulatory protein Tmel_0100 (94 aa).

The protein belongs to the RemA family.

The polypeptide is Putative regulatory protein Tmel_0100 (Thermosipho melanesiensis (strain DSM 12029 / CIP 104789 / BI429)).